Reading from the N-terminus, the 98-residue chain is uncharacterized protein (98 aa).

Belongs to the HesB/IscA family.

This is an uncharacterized protein from Staphylococcus saprophyticus subsp. saprophyticus (strain ATCC 15305 / DSM 20229 / NCIMB 8711 / NCTC 7292 / S-41).